A 128-amino-acid polypeptide reads, in one-letter code: L-ectoine synthase (128 aa).

This sequence belongs to the ectoine synthase family.

The enzyme catalyses (2S)-4-acetamido-2-aminobutanoate = L-ectoine + H2O. The protein operates within amine and polyamine biosynthesis; ectoine biosynthesis; L-ectoine from L-aspartate 4-semialdehyde: step 3/3. Functionally, catalyzes the circularization of gamma-N-acetyl-alpha,gamma-diaminobutyric acid (ADABA) to ectoine (1,4,5,6-tetrahydro-2-methyl-4-pyrimidine carboxylic acid), which is an excellent osmoprotectant. In Vibrio atlanticus (strain LGP32) (Vibrio splendidus (strain Mel32)), this protein is L-ectoine synthase.